The following is a 520-amino-acid chain: MPSLVVSGIMERNGGFGELGCFGGSAKDRGLLEDERALQLALDQLCLLGLGEPPAPTAGEDGGGGGGGAPAQPAAPPQPAPPPPPAAPPAAPTAAPAAQTPQPPTAPKGASDAKLCALYKEAELRLKGSSNTTECVPVPTSEHVAEIVGRQGCKIKALRAKTNTYIKTPVRGEEPVFMVTGRREDVATARREIISAAEHFSMIRASRNKSGAAFGVAPALPGQVTIRVRVPYRVVGLVVGPKGATIKRIQQQTNTYIITPSRDRDPVFEITGAPGNVERAREEIETHIAVRTGKILEYNNENDFLAGSPDAAIDSRYSDAWRVHQPGCKPLSTFRQNSLGCIGECGVDSGFEAPRLGEQGGDFGYGGYLFPGYGVGKQDVYYGVAETSPPLWAGQENATPTSVLFSSASSSSSSSAKARAGPPGAHRSPATSAGPELAGLPRRPPGEPLQGFSKLGGGGLRSPGGGRDCMVCFESEVTAALVPCGHNLFCMECAVRICERTDPECPVCHITATQAIRIFS.

The interval 49–111 is disordered; it reads GLGEPPAPTA…QPPTAPKGAS (63 aa). The span at 60-69 shows a compositional bias: gly residues; sequence EDGGGGGGGA. The segment covering 73-91 has biased composition (pro residues); that stretch reads PAAPPQPAPPPPPAAPPAA. KH domains follow at residues 132–193 and 223–284; these read TTEC…RREI and QVTI…REEI. At serine 338 the chain carries Phosphoserine. The segment at 412–461 is disordered; it reads SSSSAKARAGPPGAHRSPATSAGPELAGLPRRPPGEPLQGFSKLGGGGLR. Residue serine 462 is modified to Phosphoserine. Residues 469–509 form an RING-type zinc finger; sequence CMVCFESEVTAALVPCGHNLFCMECAVRICERTDPECPVCH.

Post-translationally, phosphorylated. In terms of tissue distribution, highest levels found in fetal brain and testis. Detected also in thymus, salivary gland and uterus.

It localises to the cytoplasm. Its subcellular location is the nucleus. The protein localises to the P-body. Functionally, RNA binding protein, may be involved in post-transcriptional regulatory mechanisms. The chain is RNA-binding protein MEX3A (MEX3A) from Homo sapiens (Human).